The chain runs to 134 residues: Replication enhancer protein (134 aa).

It belongs to the geminiviridae replication enhancer protein family. In terms of assembly, homooligomer. Interacts with the replication-associated protein (REP). Interacts with host proliferating cell nuclear antigen (PCNA). Interacts with host retinoblastoma-related protein 1 (RBR1), and may thereby deregulate the host cell cycle. Oligomerization and interaction with PCNA are necessary for optimal replication enhancement.

In terms of biological role, increases viral DNA accumulation. Enhances infectivity and symptom expression. This is Replication enhancer protein from Tomato pseudo-curly top virus (TPCTV).